The following is a 33-amino-acid chain: Photosystem II reaction center protein Psb30 (33 aa).

Residues 5 to 25 (IVFQLTSLVLILAAGPLVVVL) traverse the membrane as a helical segment.

It belongs to the Psb30/Ycf12 family. In terms of assembly, PSII is composed of 1 copy each of membrane proteins PsbA, PsbB, PsbC, PsbD, PsbE, PsbF, PsbH, PsbI, PsbJ, PsbK, PsbL, PsbM, PsbT, PsbX, PsbY, PsbZ, Psb30/Ycf12, peripheral proteins of the oxygen-evolving complex and a large number of cofactors. It forms dimeric complexes.

The protein localises to the plastid. It is found in the chloroplast thylakoid membrane. Functionally, a core subunit of photosystem II (PSII), probably helps stabilize the reaction center. The chain is Photosystem II reaction center protein Psb30 from Tetradesmus obliquus (Green alga).